The following is a 464-amino-acid chain: PH domain-containing rcdII (464 aa).

Residues 8–210 (KSSKEIIEDL…NTKLMSNLEI (203 aa)) adopt a coiled-coil conformation. Disordered stretches follow at residues 215-290 (NFNN…NSSG) and 317-347 (CNNN…SNSN). 3 stretches are compositionally biased toward low complexity: residues 234–288 (STTT…SSNS), 317–328 (CNNNNNNNNGNS), and 338–347 (RSRSSSSNSN). Positions 353–461 (KIVKEGWLKR…WKDTISSLMP (109 aa)) constitute a PH domain.

This chain is PH domain-containing rcdII (rcdII), found in Dictyostelium discoideum (Social amoeba).